The chain runs to 100 residues: Urease subunit gamma (100 aa).

Belongs to the urease gamma subunit family. Heterotrimer of UreA (gamma), UreB (beta) and UreC (alpha) subunits. Three heterotrimers associate to form the active enzyme.

The protein localises to the cytoplasm. The enzyme catalyses urea + 2 H2O + H(+) = hydrogencarbonate + 2 NH4(+). Its pathway is nitrogen metabolism; urea degradation; CO(2) and NH(3) from urea (urease route): step 1/1. The sequence is that of Urease subunit gamma from Bordetella pertussis (strain Tohama I / ATCC BAA-589 / NCTC 13251).